The following is a 194-amino-acid chain: Large ribosomal subunit protein bL25 (194 aa).

The protein belongs to the bacterial ribosomal protein bL25 family. CTC subfamily. As to quaternary structure, part of the 50S ribosomal subunit; part of the 5S rRNA/L5/L18/L25 subcomplex. Contacts the 5S rRNA. Binds to the 5S rRNA independently of L5 and L18.

Its function is as follows. This is one of the proteins that binds to the 5S RNA in the ribosome where it forms part of the central protuberance. In Geotalea uraniireducens (strain Rf4) (Geobacter uraniireducens), this protein is Large ribosomal subunit protein bL25.